Consider the following 528-residue polypeptide: MSNPLEFPWLSVLVLLPLLAAFGIPLIPQSRWVRWYALAVGAFDLGLMAYVFARHYDLQDFSLQLAERYAWVPQIGFHWSLAVDGLSLPLVLLSGLITTLSIVAAWNLSHKPRLFFFLLLLMYGAQVGVFLAQDMLLFFLMWEIELVPVYLLISIWGGPKRQYAATKFILYTAAASIFILVGSLAMAFYGEGFSLEMAELSAKSYPLALELLAYAALLIAFGVKLPIFPLHTWLPDAHSEASAPISMILAGVLLKMGGYGLIRMNVGMLSEAHVYFAPVLAVLGVVNIIYGALAAFGQNHLKRRLAYSSIAHMGFVLIGISAFTELGINGAVLQMISHGLIAAVLFFLTGITYERTHTLALDKLGGLAKQMPKAFALFTAGSLASLALPGMSGFVGELTVFLGLTTSDAYAPTFKAGIALLAAVGIILTPIYLLSMLRQVFYGAQDPGLVLEDYLGDVRPREMAVALCLLLPILGIGFYPRLATQTYDVTTVAVAAQLRSVLATEIVQRPFFPSPVQSAQVAALPLED.

14 consecutive transmembrane segments (helical) span residues Phe7 to Ile27, Trp32 to Phe52, Leu86 to Trp106, Leu114 to Asp134, Leu136 to Trp156, Phe168 to Phe188, Ala208 to Phe228, Ser242 to Ile262, Phe276 to Phe296, Ile310 to Gly330, Ala331 to Ile351, Phe375 to Val395, Gly417 to Leu437, and Met463 to Ala483.

Belongs to the complex I subunit 4 family.

The protein resides in the cellular thylakoid membrane. The enzyme catalyses a plastoquinone + NADH + (n+1) H(+)(in) = a plastoquinol + NAD(+) + n H(+)(out). It catalyses the reaction a plastoquinone + NADPH + (n+1) H(+)(in) = a plastoquinol + NADP(+) + n H(+)(out). Functionally, NDH-1 shuttles electrons from NAD(P)H, via FMN and iron-sulfur (Fe-S) centers, to quinones in the respiratory chain. The immediate electron acceptor for the enzyme in this species is believed to be plastoquinone. Couples the redox reaction to proton translocation (for every two electrons transferred, four hydrogen ions are translocated across the cytoplasmic membrane), and thus conserves the redox energy in a proton gradient. The sequence is that of NAD(P)H-quinone oxidoreductase chain 4 1 from Synechococcus sp. (strain JA-2-3B'a(2-13)) (Cyanobacteria bacterium Yellowstone B-Prime).